The chain runs to 115 residues: Large ribosomal subunit protein bL19 (115 aa).

It belongs to the bacterial ribosomal protein bL19 family.

Functionally, this protein is located at the 30S-50S ribosomal subunit interface and may play a role in the structure and function of the aminoacyl-tRNA binding site. This is Large ribosomal subunit protein bL19 from Buchnera aphidicola subsp. Cinara cedri (strain Cc).